Consider the following 367-residue polypeptide: Putative ionic transporter y4hA (367 aa).

The next 11 helical transmembrane spans lie at 12–32 (VPLWSWIIPLFGCVIAAMTLA), 39–59 (SVVLLLMSAGLLTGAVFASVH), 74–94 (AILLAVCVTIIEVAIIGSLML), 108–128 (VFAAVMIVLNGVIGLCLVLGG), 143–163 (AALAVLGTLATLSLVLPNFVT), 172–192 (AIQLVVIGLVSVVLYGVFLFV), 221–241 (LAAGALLVLALIAVILLAMLL), 249–269 (VEALGLPQAVVGVTIAGVVLL), 291–311 (VLGSALASIGVTIPVVAAISV), 318–338 (ALGLAPQNLIMLILTLFVGTI), and 347–367 (VLQGAVHLAIFTVFLLLSAIP).

This sequence belongs to the Ca(2+):cation antiporter (CaCA) (TC 2.A.19) family.

It is found in the cell membrane. In terms of biological role, possible cation transporter. This chain is Putative ionic transporter y4hA, found in Sinorhizobium fredii (strain NBRC 101917 / NGR234).